The chain runs to 328 residues: Eukaryotic translation initiation factor 3 subunit I (328 aa).

WD repeat units follow at residues 8-49 (GHER…GTYE), 50-89 (GHTG…QLYK), 145-184 (TRES…FVES), 189-228 (NSGS…VIKT), and 286-327 (GHFG…FKYT).

The protein belongs to the eIF-3 subunit I family. In terms of assembly, component of the eukaryotic translation initiation factor 3 (eIF-3) complex. The eIF-3 complex appears to include tif32/eif3a, SPAC25G10.08/eif3b, tif33/eif3c, SPBC4C3.07/eif3f, tif35/eif3g and sum1/eif3i. This set of common subunits may also associate exclusively with either moe1/eif3d and int6/eif3e, or with SPAC821.05/eif3h and SPAC1751.03/eif3m. The eIF-3 complex may also include SPAC3A12.13c/eif3j.

It is found in the cytoplasm. It localises to the nucleus. Functionally, component of the eukaryotic translation initiation factor 3 (eIF-3) complex, which is involved in protein synthesis of a specialized repertoire of mRNAs and, together with other initiation factors, stimulates binding of mRNA and methionyl-tRNAi to the 40S ribosome. The eIF-3 complex specifically targets and initiates translation of a subset of mRNAs involved in cell proliferation. The polypeptide is Eukaryotic translation initiation factor 3 subunit I (sum1) (Schizosaccharomyces pombe (strain 972 / ATCC 24843) (Fission yeast)).